Consider the following 1453-residue polypeptide: Clustered mitochondria protein homolog (1453 aa).

Polar residues predominate over residues 78–101 (LSENGQENSPHNSDSGHETSSPDS). Residues 78–110 (LSENGQENSPHNSDSGHETSSPDSPLTPIEEGA) form a disordered region. Residues 439–690 (EDGIRAEDCT…RTFPPDVNYL (252 aa)) form the Clu domain. Positions 979–1015 (PLTPSNEEVSMPINSVKKSRSSKRRKQISSGGKENDD) are disordered. Basic residues predominate over residues 995 to 1005 (KKSRSSKRRKQ). TPR repeat units lie at residues 1235-1268 (AEIDGNIGVILYAVQEFDDALKFLQNALKLHQIY) and 1277-1310 (ALIYHLLARTYSCRGDFRTALQMEKETFTIYSKT).

Belongs to the CLU family.

Its subcellular location is the cytoplasm. Functionally, mRNA-binding protein involved in proper cytoplasmic distribution of mitochondria. In Brugia malayi (Filarial nematode worm), this protein is Clustered mitochondria protein homolog.